Here is a 254-residue protein sequence, read N- to C-terminus: Imidazole glycerol phosphate synthase subunit HisF (254 aa).

Catalysis depends on residues D12 and D131.

It belongs to the HisA/HisF family. Heterodimer of HisH and HisF.

The protein localises to the cytoplasm. It catalyses the reaction 5-[(5-phospho-1-deoxy-D-ribulos-1-ylimino)methylamino]-1-(5-phospho-beta-D-ribosyl)imidazole-4-carboxamide + L-glutamine = D-erythro-1-(imidazol-4-yl)glycerol 3-phosphate + 5-amino-1-(5-phospho-beta-D-ribosyl)imidazole-4-carboxamide + L-glutamate + H(+). Its pathway is amino-acid biosynthesis; L-histidine biosynthesis; L-histidine from 5-phospho-alpha-D-ribose 1-diphosphate: step 5/9. IGPS catalyzes the conversion of PRFAR and glutamine to IGP, AICAR and glutamate. The HisF subunit catalyzes the cyclization activity that produces IGP and AICAR from PRFAR using the ammonia provided by the HisH subunit. The polypeptide is Imidazole glycerol phosphate synthase subunit HisF (Herminiimonas arsenicoxydans).